A 591-amino-acid chain; its full sequence is Aspartate--tRNA ligase (591 aa).

Glu-173 lines the L-aspartate pocket. Positions 197 to 200 (QLFK) are aspartate. Position 219 (Arg-219) interacts with L-aspartate. ATP contacts are provided by residues 219 to 221 (RDE) and Gln-228. His-448 lines the L-aspartate pocket. An ATP-binding site is contributed by Glu-482. L-aspartate is bound at residue Arg-489. 534 to 537 (GLDR) is a binding site for ATP.

The protein belongs to the class-II aminoacyl-tRNA synthetase family. Type 1 subfamily. In terms of assembly, homodimer.

The protein localises to the cytoplasm. It carries out the reaction tRNA(Asp) + L-aspartate + ATP = L-aspartyl-tRNA(Asp) + AMP + diphosphate. Functionally, catalyzes the attachment of L-aspartate to tRNA(Asp) in a two-step reaction: L-aspartate is first activated by ATP to form Asp-AMP and then transferred to the acceptor end of tRNA(Asp). The protein is Aspartate--tRNA ligase of Shewanella sp. (strain MR-4).